The following is a 210-amino-acid chain: High mobility group protein B2 (210 aa).

N6-acetyllysine is present on Lys3. The segment at residues Pro9–Val79 is a DNA-binding region (HMG box 1). Position 23 is a cysteine sulfonic acid (-SO3H); alternate (Cys23). A disulfide bridge connects residues Cys23 and Cys45. N6-acetyllysine is present on Lys30. Ser35 carries the post-translational modification Phosphoserine. An N6-acetyllysine modification is found at Lys43. At Cys45 the chain carries Cysteine sulfonic acid (-SO3H); alternate. The disordered stretch occupies residues Tyr71–Phe102. Lys90 carries the post-translational modification N6-acetyllysine. Residues Pro95–Arg163 constitute a DNA-binding region (HMG box 2). A Phosphoserine modification is found at Ser100. Cys106 is subject to Cysteine sulfonic acid (-SO3H). N6-acetyllysine occurs at positions 114 and 141. Over residues Tyr162–Lys172 the composition is skewed to basic and acidic residues. The interval Tyr162–Glu210 is disordered. The required for chemotactic activity stretch occupies residues Lys165–Gly180. The segment covering Pro187–Glu210 has biased composition (acidic residues).

It belongs to the HMGB family. In terms of assembly, interacts with POU2F2, POU2F1 and POU3F1. Component of the RAG complex composed of core components RAG1 and RAG2, and associated component HMGB1 or HMGB2. Component of the SET complex, composed of at least ANP32A, APEX1, HMGB2, NME1, SET and TREX1. Directly interacts with SET. Interacts with LEF1. Post-translationally, reduction/oxidation of cysteine residues Cys-23, Cys-45 and Cys-106 and a possible intramolecular disulfide bond involving Cys-23 and Cys-45 give rise to different redox forms with specific functional activities in various cellular compartments: 1- fully reduced HMGB2 (HMGB2C23hC45hC106h), 2- disulfide HMGB2 (HMGB2C23-C45C106h) and 3- sulfonyl HMGB2 (HMGB2C23soC45soC106so). Widely expressed in embryo. In adult mainly expressed in lymphoid organs and testes. Expressed in primary spermatocytes. Expressed in the superficial zone of articular cartilage.

It is found in the nucleus. Its subcellular location is the chromosome. The protein localises to the cytoplasm. The protein resides in the secreted. Functionally, multifunctional protein with various roles in different cellular compartments. May act in a redox sensitive manner. In the nucleus is an abundant chromatin-associated non-histone protein involved in transcription, chromatin remodeling and V(D)J recombination and probably other processes. Binds DNA with a preference to non-canonical DNA structures such as single-stranded DNA. Can bent DNA and enhance DNA flexibility by looping thus providing a mechanism to promote activities on various gene promoters by enhancing transcription factor binding and/or bringing distant regulatory sequences into close proximity. Involved in V(D)J recombination by acting as a cofactor of the RAG complex: acts by stimulating cleavage and RAG protein binding at the 23 bp spacer of conserved recombination signal sequences (RSS). Proposed to be involved in the innate immune response to nucleic acids by acting as a cytoplasmic promiscuous immunogenic DNA/RNA sensor which cooperates with subsequent discriminative sensing by specific pattern recognition receptors. In the extracellular compartment acts as a chemokine. Promotes proliferation and migration of endothelial cells implicating AGER/RAGE. Has antimicrobial activity in gastrointestinal epithelial tissues. Involved in inflammatory response to antigenic stimulus coupled with pro-inflammatory activity. May play a role in germ cell differentiation. Involved in modulation of neurogenesis probably by regulation of neural stem proliferation. Involved in articular cartilage surface maintenance implicating LEF1 and the Wnt/beta-catenin pathway. The polypeptide is High mobility group protein B2 (Hmgb2) (Mus musculus (Mouse)).